The sequence spans 292 residues: 4-hydroxy-tetrahydrodipicolinate synthase (292 aa).

Residue T45 participates in pyruvate binding. Y133 (proton donor/acceptor) is an active-site residue. The active-site Schiff-base intermediate with substrate is the K161. Residue I203 participates in pyruvate binding.

The protein belongs to the DapA family. Homodimer.

The protein localises to the cytoplasm. The enzyme catalyses L-aspartate 4-semialdehyde + pyruvate = (2S,4S)-4-hydroxy-2,3,4,5-tetrahydrodipicolinate + H2O + H(+). It functions in the pathway amino-acid biosynthesis; L-lysine biosynthesis via DAP pathway; (S)-tetrahydrodipicolinate from L-aspartate: step 3/4. Catalyzes the condensation of (S)-aspartate-beta-semialdehyde [(S)-ASA] and pyruvate to 4-hydroxy-tetrahydrodipicolinate (HTPA). In Stutzerimonas stutzeri (strain A1501) (Pseudomonas stutzeri), this protein is 4-hydroxy-tetrahydrodipicolinate synthase.